Consider the following 215-residue polypeptide: 3-dehydroquinate dehydratase (215 aa).

Residues 27–29 (ELR) and arginine 54 contribute to the 3-dehydroquinate site. The active-site Proton donor/acceptor is the histidine 112. Lysine 139 functions as the Schiff-base intermediate with substrate in the catalytic mechanism. Arginine 176 and glutamine 198 together coordinate 3-dehydroquinate.

The protein belongs to the type-I 3-dehydroquinase family. As to quaternary structure, homodimer.

The enzyme catalyses 3-dehydroquinate = 3-dehydroshikimate + H2O. It participates in metabolic intermediate biosynthesis; chorismate biosynthesis; chorismate from D-erythrose 4-phosphate and phosphoenolpyruvate: step 3/7. Involved in the third step of the chorismate pathway, which leads to the biosynthesis of aromatic amino acids. Catalyzes the cis-dehydration of 3-dehydroquinate (DHQ) and introduces the first double bond of the aromatic ring to yield 3-dehydroshikimate. The polypeptide is 3-dehydroquinate dehydratase (Pyrococcus abyssi (strain GE5 / Orsay)).